The sequence spans 253 residues: Probable transcriptional regulatory protein Tery_2125 (253 aa).

It belongs to the TACO1 family.

The protein localises to the cytoplasm. This is Probable transcriptional regulatory protein Tery_2125 from Trichodesmium erythraeum (strain IMS101).